The primary structure comprises 396 residues: Elongation factor Tu (396 aa).

A tr-type G domain is found at 10–206 (KPHVNIGTIG…AVDSYIPEPV (197 aa)). Positions 19-26 (GHVDHGKT) are G1. GTP is bound at residue 19-26 (GHVDHGKT). T26 provides a ligand contact to Mg(2+). The tract at residues 60 to 64 (GITIA) is G2. The tract at residues 81–84 (DCPG) is G3. Residues 81 to 85 (DCPGH) and 136 to 139 (NKAD) each bind GTP. The segment at 136–139 (NKAD) is G4. Residues 174 to 176 (SAL) are G5.

The protein belongs to the TRAFAC class translation factor GTPase superfamily. Classic translation factor GTPase family. EF-Tu/EF-1A subfamily. In terms of assembly, monomer.

The protein localises to the cytoplasm. It catalyses the reaction GTP + H2O = GDP + phosphate + H(+). In terms of biological role, GTP hydrolase that promotes the GTP-dependent binding of aminoacyl-tRNA to the A-site of ribosomes during protein biosynthesis. The chain is Elongation factor Tu from Geotalea uraniireducens (strain Rf4) (Geobacter uraniireducens).